Here is a 146-residue protein sequence, read N- to C-terminus: UPF0178 protein BC_3040 (146 aa).

The protein belongs to the UPF0178 family.

This is UPF0178 protein BC_3040 from Bacillus cereus (strain ATCC 14579 / DSM 31 / CCUG 7414 / JCM 2152 / NBRC 15305 / NCIMB 9373 / NCTC 2599 / NRRL B-3711).